The primary structure comprises 124 residues: uncharacterized protein (124 aa).

In terms of biological role, this protein may be involved in virus assembly. This is an uncharacterized protein from Sulfolobus spindle-shape virus 1 (SSV1).